Here is a 287-residue protein sequence, read N- to C-terminus: Myoblast determination protein 1 homolog B (287 aa).

Residues 96–147 (DRRRAATMRERRRLSKVNDAFETLKRCTSTNPNQRLPKVDILRNAISYIDSL) form the bHLH domain. 2 disordered regions span residues 161–202 (NMEH…FYTD) and 231–277 (QSPS…QLSH). Positions 168 to 188 (DSDASSPSSNCSDGMNSPPCS) are enriched in low complexity. The segment covering 267–277 (SPGNSCTQLSH) has biased composition (polar residues).

Efficient DNA binding requires dimerization with another bHLH protein.

The protein localises to the nucleus. Its function is as follows. May act as a transcriptional activator that promotes transcription of muscle-specific target genes and plays a role in muscle differentiation. In Xenopus laevis (African clawed frog), this protein is Myoblast determination protein 1 homolog B (myod1-b).